The primary structure comprises 63 residues: Muscarinic toxin 2 (63 aa).

4 cysteine pairs are disulfide-bonded: Cys-3/Cys-22, Cys-17/Cys-42, Cys-44/Cys-55, and Cys-56/Cys-61.

Belongs to the three-finger toxin family. Short-chain subfamily. Type B muscarinic toxin sub-subfamily. In terms of assembly, monomer. As to expression, expressed by the venom gland.

The protein resides in the secreted. Functionally, blocks M2 muscarinic acetylcholine receptors (CHRM2). Fully blocks the binding of N-methylscopolamine (NMS) and oxotremorine-M to M2 receptors, slightly increased NMS binding to M1 receptors. The chain is Muscarinic toxin 2 from Dendroaspis angusticeps (Eastern green mamba).